Consider the following 110-residue polypeptide: Nucleoid-associated protein RALTA_A1934 (110 aa).

A compositionally biased stretch (polar residues) spans 88-98 (TTQEKMGSMTS). Residues 88–110 (TTQEKMGSMTSGLPLPPGFKLPF) form a disordered region. Residues 101–110 (PLPPGFKLPF) show a composition bias toward pro residues.

This sequence belongs to the YbaB/EbfC family. As to quaternary structure, homodimer.

The protein localises to the cytoplasm. The protein resides in the nucleoid. In terms of biological role, binds to DNA and alters its conformation. May be involved in regulation of gene expression, nucleoid organization and DNA protection. The sequence is that of Nucleoid-associated protein RALTA_A1934 from Cupriavidus taiwanensis (strain DSM 17343 / BCRC 17206 / CCUG 44338 / CIP 107171 / LMG 19424 / R1) (Ralstonia taiwanensis (strain LMG 19424)).